The sequence spans 67 residues: Conotoxin TsMMSK-B021 (67 aa).

The first 20 residues, 1–20, serve as a signal peptide directing secretion; it reads MMSKLGVLLTICLLLFPLTA. The propeptide occupies 21–50; sequence VQLDGDQPADLPELRAQDFAPERSPWFDPV. 3 disulfide bridges follow: C53–C65, C54–C61, and C58–C64. P63 is subject to 4-hydroxyproline.

It belongs to the conotoxin M superfamily. Expressed by the venom duct.

The protein localises to the secreted. The chain is Conotoxin TsMMSK-B021 from Conus tessulatus (Tessellate cone).